Reading from the N-terminus, the 130-residue chain is Small ribosomal subunit protein uS9 (130 aa).

The protein belongs to the universal ribosomal protein uS9 family.

In Colwellia psychrerythraea (strain 34H / ATCC BAA-681) (Vibrio psychroerythus), this protein is Small ribosomal subunit protein uS9.